Consider the following 476-residue polypeptide: E3 SUMO-protein ligase EGR2 (476 aa).

Positions 127–141 are enriched in low complexity; it reads PASTTASSSVTSASP. The segment at 127 to 178 is disordered; sequence PASTTASSSVTSASPNPLATGPLGVCTMSQTQPDLDHLYSPPPPPPPYSGCA. Residues 162–165 carry the HCFC1-binding-motif (HBM) motif; the sequence is DHLY. Lys-247 is subject to N6-acetyllysine; by EP300. Disordered stretches follow at residues 275–300 and 318–341; these read GPSA…SSSA and RPIL…RPYP. Gly residues predominate over residues 281–290; it reads TGPGASGGSE. C2H2-type zinc fingers lie at residues 340-364, 370-392, and 398-420; these read YPCP…IRIH, FQCR…IRTH, and FACD…TKIH. Residues 412–476 are disordered; the sequence is ERKRHTKIHL…APCSSRTRTP (65 aa). Over residues 415–425 the composition is skewed to basic residues; the sequence is RHTKIHLRQKE. Low complexity predominate over residues 429 to 476; that stretch reads SAPSASVPAPSTASCSGGVQPGGTLCSSNSSSLGGGPLAPCSSRTRTP.

It belongs to the EGR C2H2-type zinc-finger protein family. As to quaternary structure, interacts with HCFC1. Interacts with WWP2. Interacts with UBC9. Interacts with CITED1. Interacts (via phosphorylated form) with SFN. In terms of processing, ubiquitinated by WWP2 leading to proteasomal degradation. Acetylated at Lys-247. May be deacetylated by HDAC6, HDAC10 or SIRT1.

It is found in the nucleus. It functions in the pathway protein modification; protein sumoylation. Its function is as follows. Sequence-specific DNA-binding transcription factor. Plays a role in hindbrain segmentation by regulating the expression of a subset of homeobox containing genes and in Schwann cell myelination by regulating the expression of genes involved in the formation and maintenance of myelin. Binds to two EGR2-consensus sites EGR2A (5'-CTGTAGGAG-3') and EGR2B (5'-ATGTAGGTG-3') in the HOXB3 enhancer and promotes HOXB3 transcriptional activation. Binds to specific DNA sites located in the promoter region of HOXA4, HOXB2 and ERBB2. Regulates hindbrain segmentation by controlling the expression of Hox genes, such as HOXA4, HOXB3 and HOXB2, and thereby specifying odd and even rhombomeres. Promotes the expression of HOXB3 in the rhombomere r5 in the hindbrain. Regulates myelination in the peripheral nervous system after birth, possibly by regulating the expression of myelin proteins, such as MPZ, and by promoting the differentiation of Schwann cells. Involved in the development of the jaw openener musculature, probably by playing a role in its innervation through trigeminal motor neurons. May play a role in adipogenesis, possibly by regulating the expression of CEBPB. Functionally, E3 SUMO-protein ligase helping SUMO1 conjugation to its coregulators NAB1 and NAB2, whose sumoylation down-regulates EGR2 transcriptional activity. The sequence is that of E3 SUMO-protein ligase EGR2 (EGR2) from Homo sapiens (Human).